Consider the following 3019-residue polypeptide: Genome polyprotein (3019 aa).

At Ser2 the chain carries N-acetylserine; by host. An interaction with STAT1 region spans residues 2–23 (STLPKPQRITKRNINRRPQDVK). The interval 2–58 (STLPKPQRITKRNINRRPQDVKFPGGGQIVGGVYVLPRRGPKLGVRAVRKTSERSQP) is interaction with EIF2AK2/PKR. The tract at residues 2–59 (STLPKPQRITKRNINRRPQDVKFPGGGQIVGGVYVLPRRGPKLGVRAVRKTSERSQPR) is interaction with DDX3X. The interval 2 to 75 (STLPKPQRIT…PRARRTEGRS (74 aa)) is disordered. The Cytoplasmic portion of the chain corresponds to 2 to 168 (STLPKPQRIT…EDGINFATGN (167 aa)). Short sequence motifs (nuclear localization signal) lie at residues 5 to 13 (PKPQRITKR) and 38 to 43 (PRRGPK). A Phosphoserine; by host modification is found at Ser53. 2 short sequence motifs (nuclear localization signal) span residues 58–64 (PRSRRQP) and 66–71 (PRARRT). Residues 58–68 (PRSRRQPIPRA) are compositionally biased toward basic residues. Phosphoserine; by host is present on residues Ser99 and Ser116. The tract at residues 112-152 (PRRRSRNLGKVIDTLTCGFADLMGYIPLVGAPVGGVARALA) is important for endoplasmic reticulum and mitochondrial localization. An interaction with APOA2 region spans residues 122 to 173 (VIDTLTCGFADLMGYIPLVGAPVGGVARALAHGVRALEDGINFATGNLPGCS). An important for lipid droplets localization region spans residues 164–167 (FATG). A helical membrane pass occupies residues 169-189 (LPGCSFSIFLLALLSCLLTPT). Residues 178–191 (LLALLSCLLTPTAG) constitute a propeptide, ER anchor for the core protein, removed in mature form by host signal peptidase. Topologically, residues 190–358 (AGLEYRNASG…IGAHWGVMAG (169 aa)) are lumenal. N-linked (GlcNAc...) asparagine; by host glycans are attached at residues Asn196, Asn209, and Asn234. Residues 265–296 (MVGAATLCSALYVGDLCGALFLVGQGFSWRHR) form an important for fusion region. A glycan (N-linked (GlcNAc...) asparagine; by host) is linked at Asn305. The chain crosses the membrane as a helical span at residues 359 to 379 (VAYYSMQGNWAKVFLVLCLFS). Over 380–730 (GVDASTTITG…WEFVILIFLL (351 aa)) the chain is Lumenal. An HVR1 region spans residues 385 to 412 (TTITGGVAASGAFTITSLFSTGAKQPLH). N-linked (GlcNAc...) (high mannose) asparagine; by host glycans are attached at residues Asn417, Asn423, and Asn430. Disulfide bonds link Cys429–Cys553, Cys452–Cys459, Cys487–Cys495, and Cys504–Cys509. Asn448 is a glycosylation site (N-linked (GlcNAc...) asparagine; by host). An HVR2 region spans residues 475 to 479 (ANISG). A glycan (N-linked (GlcNAc...) asparagine; by host) is linked at Asn476. The tract at residues 481 to 494 (SSEKPYCWHYAPRP) is CD81-binding 1. An N-linked (GlcNAc...) asparagine; by host glycan is attached at Asn533. The interval 545–552 (PPTEPWFG) is CD81-binding 2. Asn557 is a glycosylation site (N-linked (GlcNAc...) asparagine; by host). Disulfide bonds link Cys565-Cys570, Cys586-Cys590, Cys602-Cys625, and Cys612-Cys649. Residues Asn628 and Asn650 are each glycosylated (N-linked (GlcNAc...) (high mannose) asparagine; by host). Cys657 and Cys682 are joined by a disulfide. Positions 665–676 (SEMYPLLHSTTE) are PKR/eIF2-alpha phosphorylation homology domain (PePHD). The helical transmembrane segment at 731–751 (LADARVCVVLWMMMLISQAEA) threads the bilayer. The Lumenal portion of the chain corresponds to 752–762 (ALENLIVLNAI). The chain crosses the membrane as a helical span at residues 763 to 783 (SAAGTHGIWWSLVAFCVAWHV). Over 784-786 (RGR) the chain is Cytoplasmic. A helical transmembrane segment spans residues 787-808 (IFPIAVYSIVGLWPLLLLVLML). The Lumenal segment spans residues 809-818 (PYRAYAWTGT). Residues 819–839 (DTSTLGAGVLSLFALFTLSPW) traverse the membrane as a helical segment. At 840–843 (YKHW) the chain is on the cytoplasmic side. A helical membrane pass occupies residues 844 to 863 (IARLIWWNQYTIARCEAALQ). The Lumenal portion of the chain corresponds to 864–886 (IWVPPLLARGARDGIILLAGLFY). The helical transmembrane segment at 887 to 907 (PALVFDITKLLLAILGPLYIL) threads the bilayer. The 124-residue stretch at 908–1031 (QASLVRVPYF…DYRSMGWRLL (124 aa)) folds into the Peptidase C18 domain. At 908 to 1662 (QASLVRVPYF…CMAADLEVAT (755 aa)) the chain is on the cytoplasmic side. The interval 909-1211 (ASLVRVPYFV…PVESLSAQTR (303 aa)) is protease NS2-3. Cys927 is lipidated: S-palmitoyl cysteine; by host. The tract at residues 934–954 (TGGKYVQMVLLALARGFNTYL) is interaction with host SCPS1. Residues His957, Glu977, and Cys998 each act as for protease NS2 activity; shared with dimeric partner in the active site. Positions 1032 to 1213 (APITAHAQQT…ESLSAQTRSP (182 aa)) constitute a Peptidase S29 domain. Active-site charge relay system; for serine protease NS3 activity residues include His1088 and Asp1112. 2 residues coordinate Zn(2+): Cys1128 and Cys1130. Ser1170 functions as the Charge relay system; for serine protease NS3 activity in the catalytic mechanism. Zn(2+) contacts are provided by Cys1176 and His1180. 1235 to 1242 (APTGSGES) is a binding site for ATP. The Mg(2+) site is built by Ser1242 and Glu1322. The short motif at 1321 to 1324 (DECH) is the DECH box element. In terms of domain architecture, Helicase C-terminal spans 1366-1543 (NIEEVALTGE…ELTPSETTVR (178 aa)). A disordered region spans residues 1482–1505 (VPQDAVSRSQRRGRTGRGKSGTYR). Residues 1491–1503 (QRRGRTGRGKSGT) are RNA-binding. The helical transmembrane segment at 1663-1683 (SAWVLLGGVMAALTAYCLSVG) threads the bilayer. Residues 1684 to 1695 (SVVIVGHLVLGG) are NS3-binding. Residues 1684 to 1810 (SVVIVGHLVL…SVTSPLTTNQ (127 aa)) are Cytoplasmic-facing. The chain crosses the membrane as a helical span at residues 1811 to 1829 (TLLFNIMGGWVASNLAPPP). Residues 1830 to 1833 (ASTA) lie on the Lumenal side of the membrane. The chain crosses the membrane as a helical span at residues 1834-1854 (FVVSGLAGAAVGSIGLGKVLL). Asp1855 is a topological domain (cytoplasmic). The chain crosses the membrane as a helical span at residues 1856-1876 (ILAGYGAGVAGALVAFKIMGG). Residues 1877–1886 (EMPSTEDMVN) lie on the Lumenal side of the membrane. A helical membrane pass occupies residues 1887 to 1907 (LLPAILSPGALVVGVICAAIL). Residues 1908-1977 (RRHVGPGEGA…WINEDYPTPC (70 aa)) lie on the Cytoplasmic side of the membrane. A lipid anchor (S-palmitoyl cysteine; by host) is attached at Cys1977. Residues 1978–2007 (DGNWLYDIWNWVCTVLADFKLWLGAKILPK) lie within the membrane without spanning it. Residues 2008-2998 (MPGIPFLSCQ…YHSVSRARSR (991 aa)) are Cytoplasmic-facing. Residues Cys2016, Cys2034, Cys2036, and Cys2057 each contribute to the Zn(2+) site. The FKBP8-binding stretch occupies residues 2125-2213 (EFFTELDGVR…ASSSASQLSA (89 aa)). Residues 2125-2337 (EFFTELDGVR…PVPPPRRKRT (213 aa)) form a transcriptional activation region. The segment at 2140–2144 (PVCRP) is interaction with non-structural protein 4A. A disordered region spans residues 2191 to 2225 (AKRRLDRGSPPSLASSSASQLSAPSRKATCTTHGR). The interaction with host SKP2 stretch occupies residues 2194–2446 (RLDRGSPPSL…ALITPCAAEE (253 aa)). Phosphoserine; by host occurs at positions 2199, 2202, 2206, 2209, 2212, and 2215. Residues 2199–2215 (SPPSLASSSASQLSAPS) are compositionally biased toward low complexity. The segment at 2215 to 2254 (SRKATCTTHGRHPDAELITANLLWRQEMGSNITRVESESK) is ISDR. Positions 2215–2280 (SRKATCTTHG…DELSVAAECF (66 aa)) are interaction with EIF2AK2/PKR. Positions 2254-2311 (KVVILDSFEPLRACDDEDELSVAAECFKKPPKYPPALPIWARPDYNPPLVEPWKDPDY) are NS4B-binding. Residues 2304-2382 (EPWKDPDYVP…GTQSGSLTGP (79 aa)) form a V3 region. An SH3-binding motif is present at residues 2327 to 2330 (PPVP). Positions 2332–2340 (PRRKRTIVL) match the Nuclear localization signal motif. Lys2355 participates in a covalent cross-link: Glycyl lysine isopeptide (Lys-Gly) (interchain with G-Cter in ubiquitin). Positions 2356-2417 (SFPQPTCSAE…PDLSSGSWST (62 aa)) are disordered. Positions 2369–2381 (TSGVGTQSGSLTG) are enriched in polar residues. Phosphoserine; by host is present on residues Ser2457 and Ser2470. One can recognise a RdRp catalytic domain in the interval 2642 to 2760 (PLGFSYDTRC…IAESAGIDED (119 aa)). Residues Asp2648, Asp2746, and Asp2747 each contribute to the Mg(2+) site. A helical membrane pass occupies residues 2999-3019 (HLLLGLLLLTVGVGIFLLPAR).

This sequence belongs to the hepacivirus polyprotein family. As to quaternary structure, homooligomer. Interacts with E1 (via C-terminus). Interacts with the non-structural protein 5A. Interacts (via N-terminus) with host STAT1 (via SH2 domain); this interaction results in decreased STAT1 phosphorylation and ubiquitin-mediated proteasome-dependent STAT1 degradation, leading to decreased IFN-stimulated gene transcription. Interacts with host STAT3; this interaction constitutively activates STAT3. Interacts with host LTBR receptor. Interacts with host TNFRSF1A receptor and possibly induces apoptosis. Interacts with host HNRPK. Interacts with host YWHAE. Interacts with host UBE3A/E6AP. Interacts with host DDX3X. Interacts with host APOA2. Interacts with host RXRA protein. Interacts with host SP110 isoform 3/Sp110b; this interaction sequesters the transcriptional corepressor SP110 away from the nucleus. Interacts with host CREB3 nuclear transcription protein; this interaction triggers cell transformation. Interacts with host ACY3. Interacts with host C1QR1. Interacts with host RBM24; this interaction, which enhances the interaction of the mature core protein with 5'-UTR, may inhibit viral translation and favor replication. Interacts with host EIF2AK2/PKR; this interaction induces the autophosphorylation of EIF2AK2. Part of the viral assembly initiation complex composed of NS2, E1, E2, NS3, NS4A, NS5A and the mature core protein. Forms a heterodimer with envelope glycoprotein E2. Interacts with mature core protein. Interacts with protease NS2. The heterodimer E1/E2 interacts with host CLDN1; this interaction plays a role in viral entry into host cell. Interacts with host SPSB2 (via C-terminus). Part of the viral assembly initiation complex composed of NS2, E1, E2, NS3, NS4A, NS5A and the mature core protein. Interacts with host NEURL3; this interaction prevents E1 binding to glycoprotein E2. In terms of assembly, forms a heterodimer with envelope glycoprotein E1. Interacts with host CD81 and SCARB1 receptors; these interactions play a role in viral entry into host cell. Interacts with host EIF2AK2/PKR; this interaction inhibits EIF2AK2 and probably allows the virus to evade the innate immune response. Interacts with host CD209/DC-SIGN and CLEC4M/DC-SIGNR. Interact with host SPCS1; this interaction is essential for viral particle assembly. Interacts with protease NS2. The heterodimer E1/E2 interacts with host CLDN1; this interaction plays a role in viral entry into host cell. Part of the viral assembly initiation complex composed of NS2, E1, E2, NS3, NS4A, NS5A and the mature core protein. Interacts with host SLC3A2/4F2hc; the interaction may facilitate viral entry into host cell. Interacts with human PLSCR1. As to quaternary structure, homohexamer. Homoheptamer. Interacts with protease NS2. Homodimer. Interacts with host SPCS1; this interaction is essential for viral particle assembly. Interacts with envelope glycoprotein E1. Interacts with envelope glycoprotein E2. Interacts with viroporin p7. Interacts with serine protease/helicase NS3. Part of the replication complex composed of NS2, NS3, NS4A, NS4B, NS5A and the RNA-directed RNA polymerase embedded in an ER-derived membranous web. Part of the viral assembly initiation complex composed of NS2, E1, E2, NS3, NS4A, NS5A and the mature core protein. In terms of assembly, interacts with protease NS2. Interacts with non-structural protein 4A; this interaction stabilizes the folding of NS3 serine protease. NS3-NS4A interaction is essential for NS3 activation and allows membrane anchorage of the latter. NS3/NS4A complex also prevents phosphorylation of host IRF3, thus preventing the establishment of dsRNA induced antiviral state. Interacts with host MAVS; this interaction leads to the cleavage and inhibition of host MAVS. Interacts with host TICAM1; this interaction leads to the cleavage and inhibition of host TICAM1. Interacts with host TANK-binding kinase/TBK1; this interaction results in the inhibition of the association between TBK1 and IRF3, which leads to the inhibition of IRF3 activation. Interacts with host RBM24. Part of the replication complex composed of NS2, NS3, NS4A, NS4B, NS5A and the RNA-directed RNA polymerase embedded in an ER-derived membranous web. Part of the viral assembly initiation complex composed of NS2, E1, E2, NS3, NS4A, NS5A and the mature core protein. As to quaternary structure, interacts with NS3 serine protease; this interaction stabilizes the folding of NS3 serine protease. NS3-NS4A interaction is essential for NS3 activation and allows membrane anchorage of the latter. Interacts with non-structural protein 5A (via N-terminus). Part of the replication complex composed of NS2, NS3, NS4A, NS4B, NS5A and the RNA-directed RNA polymerase embedded in an ER-derived membranous web. Part of the viral assembly initiation complex composed of NS2, E1, E2, NS3, NS4A, NS5A and the mature core protein. Homomultimer. Interacts with non-structural protein NS5A. Interacts with host PLA2G4C; this interaction likely initiates the recruitment of replication complexes to lipid droplets. Interacts with host STING; this interaction disrupts the interaction between STING and TBK1 thereby suppressing the interferon signaling. Part of the replication complex composed of NS2, NS3, NS4A, NS4B, NS5A and the RNA-directed RNA polymerase embedded in an ER-derived membranous web. In terms of assembly, monomer. Homodimer; dimerization is required for RNA-binding. Interacts with the mature core protein. Interacts (via N-terminus) with non-structural protein 4A. Interacts with non-structural protein 4B. Interacts (via region D2) with RNA-directed RNA polymerase. Part of the viral assembly initiation complex composed of NS2, E1, E2, NS3, NS4A, NS5A and the mature core protein. Part of the replication complex composed of NS2, NS3, NS4A, NS4B, NS5A and the RNA-directed RNA polymerase embedded in an ER-derived membranous web. Interacts with host GRB2. Interacts with host BIN1. Interacts with host PIK3R1. Interacts with host SRCAP. Interacts with host FKBP8. Interacts (via C-terminus) with host VAPB (via MSP domain). Interacts with host EIF2AK2/PKR; this interaction leads to disruption of EIF2AK2 dimerization by NS5A and probably allows the virus to evade the innate immune response. Interacts (via N-terminus) with host PACSIN2 (via N-terminus); this interaction attenuates protein kinase C alpha-mediated phosphorylation of PACSIN2 by disrupting the interaction between PACSIN2 and PRKCA. Interacts (via N-terminus) with host SRC kinase (via SH2 domain). Interacts with most Src-family kinases. Interacts with host IFI27 and SKP2; promotes the ubiquitin-mediated proteasomal degradation of NS5A. Interacts with host GPS2. Interacts with host TNFRSF21; this interaction allows the modulation by the virus of JNK, p38 MAPK, STAT3, and Akt signaling pathways in a DR6-dependent manner. Interacts (via N-terminus) with host CIDEB (via N-terminus); this interaction seems to regulate the association of HCV particles with APOE. Interacts with host CHKA/Choline Kinase-alpha; CHKA bridges host PI4KA and NS5A and potentiates NS5A-stimulated PI4KA activity, which then facilitates the targeting of the ternary complex to the ER for viral replication. Interacts with host SPSB2 (via C-terminus); this interaction targets NS5A for ubiquitination and degradation. Interacts with host RAB18; this interaction may promote the association of NS5A and other replicase components with lipid droplets. Interacts (via region D2) with host PPIA/CYPA; the interaction stimulates RNA-binding ability of NS5A and is dependent on the peptidyl-prolyl cis-trans isomerase activity of PPIA/CYPA. Interacts with host TRIM14; this interaction induces the degradation of NS5A. As to quaternary structure, homooligomer. Interacts with non-structural protein 5A. Interacts with host VAPB. Interacts with host PRK2/PKN2. Interacts with host HNRNPA1 and SEPT6; these interactions facilitate viral replication. Part of the replication complex composed of NS2, NS3, NS4A, NS4B, NS5A and the RNA-directed RNA polymerase. It depends on Zn(2+) as a cofactor. Mg(2+) is required as a cofactor. Post-translationally, specific enzymatic cleavages in vivo yield mature proteins. The structural proteins, core, E1, E2 and p7 are produced by proteolytic processing by host signal peptidases. The core protein precursor is synthesized as a 23 kDa, which is retained in the ER membrane through the hydrophobic signal peptide. Cleavage by the signal peptidase releases the 21 kDa mature core protein. The cleavage of the core protein precursor occurs between aminoacids 176 and 188 but the exact cleavage site is not known. Some degraded forms of the core protein appear as well during the course of infection. The other proteins (p7, NS2, NS3, NS4A, NS4B, NS5A and NS5B) are cleaved by the viral proteases. Autoprocessing between NS2 and NS3 is mediated by the NS2 cysteine protease catalytic domain and regulated by the NS3 N-terminal domain. In terms of processing, phosphorylated by host PKC and PKA. Ubiquitinated; mediated by UBE3A and leading to core protein subsequent proteasomal degradation. Post-translationally, highly N-glycosylated. In terms of processing, palmitoylation is required for NS2/3 autoprocessing and E2 recruitment to membranes. Palmitoylated. This modification may play a role in its polymerization or in protein-protein interactions. Post-translationally, phosphorylated on serines in a basal form termed p56. p58 is a hyperphosphorylated form of p56. p56 and p58 coexist in the cell in roughly equivalent amounts. Hyperphosphorylation is dependent on the presence of NS4A. Host CSNK1A1/CKI-alpha or RPS6KB1 kinases may be responsible for NS5A phosphorylation. In terms of processing, tyrosine phosphorylation is essential for the interaction with host SRC. Ubiquitinated. Ubiquitination, most probably at Lys-2355, mediated by host IFI27 and SKP2 leads to proteasomal degradation, restricting viral infection. Ubiquitination by host TRIM22 leads to interruption of viral replication. Post-translationally, the N-terminus is phosphorylated by host PRK2/PKN2.

Its subcellular location is the host endoplasmic reticulum membrane. The protein localises to the host mitochondrion membrane. The protein resides in the virion. It is found in the host cytoplasm. It localises to the host nucleus. Its subcellular location is the host lipid droplet. The protein localises to the virion membrane. The protein resides in the host mitochondrion. It is found in the host cell membrane. It localises to the host perinuclear region. The enzyme catalyses Hydrolysis of four peptide bonds in the viral precursor polyprotein, commonly with Asp or Glu in the P6 position, Cys or Thr in P1 and Ser or Ala in P1'.. It catalyses the reaction a ribonucleoside 5'-triphosphate + H2O = a ribonucleoside 5'-diphosphate + phosphate + H(+). The catalysed reaction is ATP + H2O = ADP + phosphate + H(+). It carries out the reaction RNA(n) + a ribonucleoside 5'-triphosphate = RNA(n+1) + diphosphate. Its activity is regulated as follows. Inhibited by the antiviral drug hexamethylene amiloride. Inhibition by amantadine appears to be genotype-dependent. Also inhibited by long-alkyl-chain iminosugar derivatives. With respect to regulation, activity is up-regulated by PRK2/PKN2-mediated phosphorylation. Functionally, packages viral RNA to form a viral nucleocapsid, and promotes virion budding. Participates in the viral particle production as a result of its interaction with the non-structural protein 5A. Binds RNA and may function as a RNA chaperone to induce the RNA structural rearrangements taking place during virus replication. Modulates viral translation initiation by interacting with viral IRES and 40S ribosomal subunit. Affects various cell signaling pathways, host immunity and lipid metabolism. Prevents the establishment of cellular antiviral state by blocking the interferon-alpha/beta (IFN-alpha/beta) and IFN-gamma signaling pathways and by blocking the formation of phosphorylated STAT1 and promoting ubiquitin-mediated proteasome-dependent degradation of STAT1. Activates STAT3 leading to cellular transformation. Regulates the activity of cellular genes, including c-myc and c-fos. May repress the promoter of p53, and sequester CREB3 and SP110 isoform 3/Sp110b in the cytoplasm. Represses cell cycle negative regulating factor CDKN1A, thereby interrupting an important check point of normal cell cycle regulation. Targets transcription factors involved in the regulation of inflammatory responses and in the immune response: suppresses TNF-induced NF-kappa-B activation, and activates AP-1. Binds to dendritic cells (DCs) via C1QR1, resulting in down-regulation of T-lymphocytes proliferation. Alters lipid metabolism by interacting with hepatocellular proteins involved in lipid accumulation and storage. Induces up-regulation of FAS promoter activity, and thereby contributes to the increased triglyceride accumulation in hepatocytes (steatosis). In terms of biological role, forms a heterodimer with envelope glycoprotein E2, which mediates virus attachment to the host cell, virion internalization through clathrin-dependent endocytosis and fusion with host membrane. Fusion with the host cell is most likely mediated by both E1 and E2, through conformational rearrangements of the heterodimer required for fusion rather than a classical class II fusion mechanism. E1/E2 heterodimer binds host apolipoproteins such as APOB and ApoE thereby forming a lipo-viro-particle (LVP). APOE associated to the LVP allows the initial virus attachment to cell surface receptors such as the heparan sulfate proteoglycans (HSPGs), syndecan-1 (SDC1), syndecan-1 (SDC2), the low-density lipoprotein receptor (LDLR) and scavenger receptor class B type I (SCARB1). The cholesterol transfer activity of SCARB1 allows E2 exposure and binding of E2 to SCARB1 and the tetraspanin CD81. E1/E2 heterodimer binding on CD81 activates the epithelial growth factor receptor (EGFR) signaling pathway. Diffusion of the complex E1-E2-EGFR-SCARB1-CD81 to the cell lateral membrane allows further interaction with Claudin 1 (CLDN1) and occludin (OCLN) to finally trigger HCV entry. Its function is as follows. Forms a heterodimer with envelope glycoprotein E1, which mediates virus attachment to the host cell, virion internalization through clathrin-dependent endocytosis and fusion with host membrane. Fusion with the host cell is most likely mediated by both E1 and E2, through conformational rearrangements of the heterodimer required for fusion rather than a classical class II fusion mechanism. The interaction between envelope glycoprotein E2 and host apolipoprotein E/APOE allows the proper assembly, maturation and infectivity of the viral particles. This interaction is probably promoted via the up-regulation of cellular autophagy by the virus. E1/E2 heterodimer binds host apolipoproteins such as APOB and APOE thereby forming a lipo-viro-particle (LVP). APOE associated to the LVP allows the initial virus attachment to cell surface receptors such as the heparan sulfate proteoglycans (HSPGs), syndecan-1 (SDC1), syndecan-1 (SDC2), the low-density lipoprotein receptor (LDLR) and scavenger receptor class B type I (SCARB1). The cholesterol transfer activity of SCARB1 allows E2 exposure and binding of E2 to SCARB1 and the tetraspanin CD81. E1/E2 heterodimer binding on CD81 activates the epithelial growth factor receptor (EGFR) signaling pathway. Diffusion of the complex E1-E2-EGFR-SCARB1-CD81 to the cell lateral membrane allows further interaction with Claudin 1 (CLDN1) and occludin (OCLN) to finally trigger HCV entry. Inhibits host EIF2AK2/PKR activation, preventing the establishment of an antiviral state. Viral ligand for CD209/DC-SIGN and CLEC4M/DC-SIGNR, which are respectively found on dendritic cells (DCs), and on liver sinusoidal endothelial cells and macrophage-like cells of lymph node sinuses. These interactions allow the capture of circulating HCV particles by these cells and subsequent facilitated transmission to permissive cells such as hepatocytes and lymphocyte subpopulations. The interaction between E2 and host amino acid transporter complex formed by SLC3A2 and SLC7A5/LAT1 may facilitate viral entry into host cell. Ion channel protein that acts as a viroporin and plays an essential role in the assembly, envelopment and secretion of viral particles. Regulates the host cell secretory pathway, which induces the intracellular retention of viral glycoproteins and favors assembly of viral particles. Creates a pore in acidic organelles and releases Ca(2+) and H(+) in the cytoplasm of infected cells, leading to a productive viral infection. High levels of cytoplasmic Ca(2+) may trigger membrane trafficking and transport of viral ER-associated proteins to viroplasms, sites of viral genome replication. This ionic imbalance induces the assembly of the inflammasome complex, which triggers the maturation of pro-IL-1beta into IL-1beta through the action of caspase-1. Targets also host mitochondria and induces mitochondrial depolarization. In addition of its role as a viroporin, acts as a lipid raft adhesion factor. Functionally, cysteine protease required for the proteolytic auto-cleavage between the non-structural proteins NS2 and NS3. The N-terminus of NS3 is required for the function of NS2 protease (active region NS2-3). Promotes the initiation of viral particle assembly by mediating the interaction between structural and non-structural proteins. In terms of biological role, displays three enzymatic activities: serine protease with a chymotrypsin-like fold, NTPase and RNA helicase. NS3 serine protease, in association with NS4A, is responsible for the cleavages of NS3-NS4A, NS4A-NS4B, NS4B-NS5A and NS5A-NS5B. The NS3/NS4A complex prevents phosphorylation of host IRF3, thus preventing the establishment of dsRNA induced antiviral state. The NS3/NS4A complex induces host amino acid transporter component SLC3A2, thus contributing to HCV propagation. NS3 RNA helicase binds to RNA and unwinds both dsDNA and dsRNA in the 3' to 5' direction, and likely resolves RNA complicated stable secondary structures in the template strand. Binds a single ATP and catalyzes the unzipping of a single base pair of dsRNA. Inhibits host antiviral proteins TBK1 and IRF3 thereby preventing the establishment of an antiviral state. Cleaves host MAVS/CARDIF thereby preventing the establishment of an antiviral state. Cleaves host TICAM1/TRIF, thereby disrupting TLR3 signaling and preventing the establishment of an antiviral state. Its function is as follows. Induces a specific membrane alteration that serves as a scaffold for the virus replication complex. This membrane alteration gives rise to the so-called ER-derived membranous web that contains the replication complex. NS4B self-interaction contributes to its function in membranous web formation. Promotes host TRIF protein degradation in a CASP8-dependent manner thereby inhibiting host TLR3-mediated interferon signaling. Disrupts the interaction between STING and TBK1 contributing to the inhibition of interferon signaling. Phosphorylated protein that is indispensable for viral replication and assembly. Both hypo- and hyperphosphorylated states are required for the viral life cycle. The hyperphosphorylated form of NS5A is an inhibitor of viral replication. Involved in RNA-binding and especially in binding to the viral genome. Zinc is essential for RNA-binding. Participates in the viral particle production as a result of its interaction with the mature viral core protein. Its interaction with host VAPB may target the viral replication complex to vesicles. Down-regulates viral IRES translation initiation. Mediates interferon resistance, presumably by interacting with and inhibiting host EIF2AK2/PKR. Prevents BIN1-induced apoptosis. Acts as a transcriptional activator of some host genes important for viral replication when localized in the nucleus. Via the interaction with host PACSIN2, modulates lipid droplet formation in order to promote virion assembly. Modulates TNFRSF21/DR6 signaling pathway for viral propagation. Functionally, RNA-dependent RNA polymerase that performs primer-template recognition and RNA synthesis during viral replication. Initiates RNA transcription/replication at a flavin adenine dinucleotide (FAD), resulting in a 5'- FAD cap on viral RNAs. In this way, recognition of viral 5' RNA by host pattern recognition receptors can be bypassed, thereby evading activation of antiviral pathways. This chain is Genome polyprotein, found in Homo sapiens (Human).